The chain runs to 162 residues: Putative 4-hydroxy-4-methyl-2-oxoglutarate aldolase (162 aa).

Substrate-binding positions include 75 to 78 and arginine 97; that span reads GDML. Aspartate 98 provides a ligand contact to a divalent metal cation.

This sequence belongs to the class II aldolase/RraA-like family. As to quaternary structure, homotrimer. The cofactor is a divalent metal cation.

It catalyses the reaction 4-hydroxy-4-methyl-2-oxoglutarate = 2 pyruvate. The catalysed reaction is oxaloacetate + H(+) = pyruvate + CO2. In terms of biological role, catalyzes the aldol cleavage of 4-hydroxy-4-methyl-2-oxoglutarate (HMG) into 2 molecules of pyruvate. Also contains a secondary oxaloacetate (OAA) decarboxylase activity due to the common pyruvate enolate transition state formed following C-C bond cleavage in the retro-aldol and decarboxylation reactions. The protein is Putative 4-hydroxy-4-methyl-2-oxoglutarate aldolase of Pseudomonas syringae pv. tomato (strain ATCC BAA-871 / DC3000).